The primary structure comprises 222 residues: Probable nicotinate-nucleotide adenylyltransferase (222 aa).

It belongs to the NadD family.

It catalyses the reaction nicotinate beta-D-ribonucleotide + ATP + H(+) = deamido-NAD(+) + diphosphate. It participates in cofactor biosynthesis; NAD(+) biosynthesis; deamido-NAD(+) from nicotinate D-ribonucleotide: step 1/1. Catalyzes the reversible adenylation of nicotinate mononucleotide (NaMN) to nicotinic acid adenine dinucleotide (NaAD). In Xylella fastidiosa (strain M23), this protein is Probable nicotinate-nucleotide adenylyltransferase.